A 654-amino-acid polypeptide reads, in one-letter code: Carboxypeptidase Z (654 aa).

The signal sequence occupies residues 1–20; that stretch reads MPTMPLLLAALAALAVLALA. An FZ domain is found at 43-165; sequence THSATCVDLH…APEEEGCYDP (123 aa). Cystine bridges form between Cys-48–Cys-114, Cys-56–Cys-107, Cys-98–Cys-134, Cys-123–Cys-162, and Cys-127–Cys-151. Residue Asn-62 is glycosylated (N-linked (GlcNAc...) asparagine). Residues 191-507 form the Peptidase M14 domain; the sequence is AHHSYAQMVR…EPLLNFLEMV (317 aa). Positions 253 and 256 each coordinate Zn(2+). An N-linked (GlcNAc...) asparagine glycan is attached at Asn-286. His-385 serves as a coordination point for Zn(2+). Glu-477 functions as the Proton donor/acceptor in the catalytic mechanism. Residues 596 to 630 are disordered; sequence FLPGPSRALPRFQDPQREPTQMDFEPPRARRQPAS.

Belongs to the peptidase M14 family. Zn(2+) serves as cofactor.

It is found in the secreted. The protein resides in the extracellular space. Its subcellular location is the extracellular matrix. With respect to regulation, inhibited by 2-mercaptomethyl-3-guanidinoethylthiopropanoic acid (MGTA) and guanidinoethylmercaptosuccinic acid (GEMSA). Inhibited by chelating agents such as EDTA and EGTA. Functionally, cleaves substrates with C-terminal arginine residues. Probably modulates the Wnt signaling pathway, by cleaving some undefined protein. May play a role in cleavage during prohormone processing. The chain is Carboxypeptidase Z (Cpz) from Mus musculus (Mouse).